A 393-amino-acid polypeptide reads, in one-letter code: Acetylornithine aminotransferase (393 aa).

Pyridoxal 5'-phosphate-binding positions include 100–101 (GT) and phenylalanine 132. N(2)-acetyl-L-ornithine is bound at residue arginine 135. Pyridoxal 5'-phosphate is bound at residue 217–220 (DEIQ). Lysine 246 bears the N6-(pyridoxal phosphate)lysine mark. Serine 275 is a N(2)-acetyl-L-ornithine binding site. Threonine 276 serves as a coordination point for pyridoxal 5'-phosphate.

Belongs to the class-III pyridoxal-phosphate-dependent aminotransferase family. ArgD subfamily. As to quaternary structure, homodimer. Pyridoxal 5'-phosphate is required as a cofactor.

It is found in the cytoplasm. It catalyses the reaction N(2)-acetyl-L-ornithine + 2-oxoglutarate = N-acetyl-L-glutamate 5-semialdehyde + L-glutamate. Its pathway is amino-acid biosynthesis; L-arginine biosynthesis; N(2)-acetyl-L-ornithine from L-glutamate: step 4/4. This Campylobacter jejuni subsp. jejuni serotype O:2 (strain ATCC 700819 / NCTC 11168) protein is Acetylornithine aminotransferase.